A 296-amino-acid polypeptide reads, in one-letter code: Lipoyl synthase (296 aa).

The [4Fe-4S] cluster site is built by C37, C42, C48, C63, C67, C70, and S276. A Radical SAM core domain is found at W49–L265.

It belongs to the radical SAM superfamily. Lipoyl synthase family. Requires [4Fe-4S] cluster as cofactor.

It localises to the cytoplasm. It catalyses the reaction [[Fe-S] cluster scaffold protein carrying a second [4Fe-4S](2+) cluster] + N(6)-octanoyl-L-lysyl-[protein] + 2 oxidized [2Fe-2S]-[ferredoxin] + 2 S-adenosyl-L-methionine + 4 H(+) = [[Fe-S] cluster scaffold protein] + N(6)-[(R)-dihydrolipoyl]-L-lysyl-[protein] + 4 Fe(3+) + 2 hydrogen sulfide + 2 5'-deoxyadenosine + 2 L-methionine + 2 reduced [2Fe-2S]-[ferredoxin]. It participates in protein modification; protein lipoylation via endogenous pathway; protein N(6)-(lipoyl)lysine from octanoyl-[acyl-carrier-protein]: step 2/2. Functionally, catalyzes the radical-mediated insertion of two sulfur atoms into the C-6 and C-8 positions of the octanoyl moiety bound to the lipoyl domains of lipoate-dependent enzymes, thereby converting the octanoylated domains into lipoylated derivatives. This is Lipoyl synthase from Rickettsia canadensis (strain McKiel).